The chain runs to 494 residues: Gram-negative bacteria-binding protein 1 (494 aa).

The N-terminal stretch at 1–19 (MPGLCIGILLLIGFGCTTA) is a signal peptide. The CBM39 domain occupies 20-120 (YKIPTPTVEL…QPLPVCNLGG (101 aa)). N-linked (GlcNAc...) asparagine glycans are attached at residues asparagine 56 and asparagine 81. Residues 126–160 (GCSPGDDDFTDDNQLSTEDSALEPTAPSVCEPSES) are disordered. The 360-residue stretch at 135–494 (TDDNQLSTED…DYVRVFATDN (360 aa)) folds into the GH16 domain. The N-linked (GlcNAc...) asparagine glycan is linked to asparagine 185.

This sequence belongs to the insect beta-1,3-glucan binding protein family.

It localises to the cell membrane. Functionally, plays a key role in innate immunity by acting as a pattern recognition receptor for beta-1,3-glucan from fungi and lipopolysaccharide from Gram-negative bacteria. Upon recognition of invading microorganism-derived products, acts upstream of protease spz processing enzyme SPE to activate the Toll pathway and to induce the expression of antimicrobial peptides drosomycin, cecropin and attacin. The polypeptide is Gram-negative bacteria-binding protein 1 (Drosophila melanogaster (Fruit fly)).